The sequence spans 809 residues: WASP homolog-associated protein with actin, membranes and microtubules (809 aa).

The tract at residues 1-260 (MEDEQPDSLE…EVATLCKLDI (260 aa)) is mediates association with membranes. Positions 261–630 (LKSLDEDDLG…FVPVGDQTHS (370 aa)) are mediates interaction with microtubules. Coiled coils occupy residues 271 to 298 (PRRVVALEKEAEEWTRRAEEAVVSIQDI), 384 to 479 (ELEI…CAKR), and 512 to 542 (SIQMKRDKIKEEEQKKKEWINQERQKTLQRL). 4 disordered regions span residues 506 to 528 (YSRQHHSIQMKRDKIKEEEQKKK), 546 to 571 (KDKRLAQSVRNTSGSEPVAPNLPSDL), 586 to 612 (IHPSSRKTRGVPLSEAGNVKSPKCQNC), and 627 to 707 (QTHS…FSCP). Basic and acidic residues predominate over residues 515 to 528 (MKRDKIKEEEQKKK). Position 606 is a phosphoserine (Ser606). The mediates actin nucleation stretch occupies residues 631–809 (KSSEELSLPP…DEQDPGQWDG (179 aa)). The segment covering 638–659 (LPPPPPPPPPPPPPPPPPPPPL) has biased composition (pro residues). Residues 662 to 673 (LSSSSQAATHQN) show a composition bias toward polar residues. WH2 domains follow at residues 709 to 727 (SMDEVLASLRHGRAPLRKV) and 739 to 756 (INEHILAAIRQGVKLKKV). A disordered region spans residues 754–809 (KKVHPDLGPNPSSKPTSNRRTSDLERSIKAALQRIKRVSADSEEDSDEQDPGQWDG). Residues 763-772 (NPSSKPTSNR) show a composition bias toward polar residues. The stretch at 770 to 797 (SNRRTSDLERSIKAALQRIKRVSADSEE) forms a coiled coil. A compositionally biased stretch (acidic residues) spans 794–803 (DSEEDSDEQD). At Ser795 the chain carries Phosphoserine.

Interacts with ACTR3; indicative for an association with the ARP2/3 complex. Associates with microtubules; in vitro binds to tubulin heterodimer in a 1:1 stoichiometry; decorates microtubules with a repeat of 80 A along protofilaments. Interacts with RHOD (in GTP-bound form). In terms of tissue distribution, expressed in brain, lung, heart, colon and kidney (at protein level).

The protein localises to the cytoplasm. Its subcellular location is the endoplasmic reticulum-Golgi intermediate compartment. It localises to the cytoplasmic vesicle membrane. The protein resides in the golgi apparatus. It is found in the cis-Golgi network. Functionally, acts as a nucleation-promoting factor (NPF) that stimulates Arp2/3-mediated actin polymerization both at the Golgi apparatus and along tubular membranes. Its activity in membrane tubulation requires F-actin and interaction with microtubules. Proposed to use coordinated actin-nucleating and microtubule-binding activities of distinct WHAMM molecules to drive membrane tubule elongation; when MT-bound can recruit and remodel membrane vesicles but is prevented to activate the Arp2/3 complex. Involved as a regulator of Golgi positioning and morphology. Participates in vesicle transport between the reticulum endoplasmic and the Golgi complex. Required for RhoD-dependent actin reorganization such as in cell adhesion and cell migration. This Homo sapiens (Human) protein is WASP homolog-associated protein with actin, membranes and microtubules (WHAMM).